The primary structure comprises 330 residues: Ketol-acid reductoisomerase (NADP(+)) (330 aa).

Residues 1–181 (MNVYYEQDAD…GGAKAGVIET (181 aa)) form the KARI N-terminal Rossmann domain. NADP(+) is bound by residues 24 to 27 (YGSQ), Arg-47, Ser-50, Ser-52, and 82 to 85 (DQYQ). The active site involves His-107. Gly-133 is an NADP(+) binding site. Residues 182–327 (TIKDETETDL…AKLRNMMSWL (146 aa)) enclose the KARI C-terminal knotted domain. Residues Asp-190, Glu-194, Glu-226, and Glu-230 each contribute to the Mg(2+) site. A substrate-binding site is contributed by Ser-251.

Belongs to the ketol-acid reductoisomerase family. Requires Mg(2+) as cofactor.

The catalysed reaction is (2R)-2,3-dihydroxy-3-methylbutanoate + NADP(+) = (2S)-2-acetolactate + NADPH + H(+). It carries out the reaction (2R,3R)-2,3-dihydroxy-3-methylpentanoate + NADP(+) = (S)-2-ethyl-2-hydroxy-3-oxobutanoate + NADPH + H(+). It participates in amino-acid biosynthesis; L-isoleucine biosynthesis; L-isoleucine from 2-oxobutanoate: step 2/4. The protein operates within amino-acid biosynthesis; L-valine biosynthesis; L-valine from pyruvate: step 2/4. Involved in the biosynthesis of branched-chain amino acids (BCAA). Catalyzes an alkyl-migration followed by a ketol-acid reduction of (S)-2-acetolactate (S2AL) to yield (R)-2,3-dihydroxy-isovalerate. In the isomerase reaction, S2AL is rearranged via a Mg-dependent methyl migration to produce 3-hydroxy-3-methyl-2-ketobutyrate (HMKB). In the reductase reaction, this 2-ketoacid undergoes a metal-dependent reduction by NADPH to yield (R)-2,3-dihydroxy-isovalerate. In Prosthecochloris aestuarii (strain DSM 271 / SK 413), this protein is Ketol-acid reductoisomerase (NADP(+)).